A 319-amino-acid chain; its full sequence is Tetrahydromethanopterin S-methyltransferase subunit H (319 aa).

Belongs to the MtrH family. The complex is composed of 8 subunits; MtrA, MtrB, MtrC, MtrD, MtrE, MtrF, MtrG and MtrH.

It catalyses the reaction 5-methyl-5,6,7,8-tetrahydromethanopterin + coenzyme M + 2 Na(+)(in) = 5,6,7,8-tetrahydromethanopterin + methyl-coenzyme M + 2 Na(+)(out). The protein operates within one-carbon metabolism; methanogenesis from CO(2); methyl-coenzyme M from 5,10-methylene-5,6,7,8-tetrahydromethanopterin: step 2/2. Its function is as follows. Part of a complex that catalyzes the formation of methyl-coenzyme M and tetrahydromethanopterin from coenzyme M and methyl-tetrahydromethanopterin. This is an energy-conserving, sodium-ion translocating step. MtrH catalyzes the transfer of the methyl group from methyl-tetrahydromethanopterin to the corrinoid prosthetic group of MtrA. The protein is Tetrahydromethanopterin S-methyltransferase subunit H of Methanococcus aeolicus (strain ATCC BAA-1280 / DSM 17508 / OCM 812 / Nankai-3).